Reading from the N-terminus, the 256-residue chain is Type III pantothenate kinase (256 aa).

Position 6–13 (6–13 (DVGNSHIY)) interacts with ATP. Substrate contacts are provided by residues tyrosine 99 and 106-109 (GADR). Aspartate 108 functions as the Proton acceptor in the catalytic mechanism. Aspartate 129 is a K(+) binding site. Position 132 (threonine 132) interacts with ATP. Threonine 184 contributes to the substrate binding site.

Belongs to the type III pantothenate kinase family. Homodimer. NH4(+) is required as a cofactor. K(+) serves as cofactor.

The protein resides in the cytoplasm. The catalysed reaction is (R)-pantothenate + ATP = (R)-4'-phosphopantothenate + ADP + H(+). The protein operates within cofactor biosynthesis; coenzyme A biosynthesis; CoA from (R)-pantothenate: step 1/5. Functionally, catalyzes the phosphorylation of pantothenate (Pan), the first step in CoA biosynthesis. This Legionella pneumophila (strain Corby) protein is Type III pantothenate kinase.